The sequence spans 938 residues: Isoleucine--tRNA ligase (938 aa).

The short motif at 65-75 is the 'HIGH' region element; sequence PYANGSIHIGH. L-isoleucyl-5'-AMP is bound at residue E568. Positions 609-613 match the 'KMSKS' region motif; the sequence is KMSKS. K612 contributes to the ATP binding site. Zn(2+) is bound by residues C905, C908, C921, and C924.

The protein belongs to the class-I aminoacyl-tRNA synthetase family. IleS type 1 subfamily. Monomer. Zn(2+) serves as cofactor.

Its subcellular location is the cytoplasm. It carries out the reaction tRNA(Ile) + L-isoleucine + ATP = L-isoleucyl-tRNA(Ile) + AMP + diphosphate. Catalyzes the attachment of isoleucine to tRNA(Ile). As IleRS can inadvertently accommodate and process structurally similar amino acids such as valine, to avoid such errors it has two additional distinct tRNA(Ile)-dependent editing activities. One activity is designated as 'pretransfer' editing and involves the hydrolysis of activated Val-AMP. The other activity is designated 'posttransfer' editing and involves deacylation of mischarged Val-tRNA(Ile). This chain is Isoleucine--tRNA ligase, found in Mannheimia succiniciproducens (strain KCTC 0769BP / MBEL55E).